The sequence spans 335 residues: MGEKIGVIGAGSWGTTLANLLAKKGLDVTLWAYEPELVAEMRATRVNTLFLPGTELAAGLAFTNSLEEAAAGKDVLVLVSPSQVMRSVLTQLAPLLKPGVTLVNASKGIELDTLMTMDQVCGAVLPPAVAGRFCVLSGPSFAREVAQEMPTAVVAASADLEAAAQVQRLFTAPYFRVYTNSDVVGVEIGGALKNVIALAAGISDGLGLGHNTRAALITRGLAEMNRLGRAMGADPATFAGLAGMGDLVLTCTGDLSRNRTVGMKLGQGMRLAEILGEMRMVAEGVKTAESAWRLASQMGVDMPITEKVYQVLYEDKPARQAVLELMTRDPKAERG.

The NADPH site is built by Ser12, Trp13, and Lys107. The sn-glycerol 3-phosphate site is built by Lys107, Gly138, and Ser140. Ala142 lines the NADPH pocket. The sn-glycerol 3-phosphate site is built by Lys193, Asp246, Ser256, Arg257, and Asn258. Catalysis depends on Lys193, which acts as the Proton acceptor. Arg257 is a binding site for NADPH. Residues Val281 and Glu283 each contribute to the NADPH site.

The protein belongs to the NAD-dependent glycerol-3-phosphate dehydrogenase family.

The protein resides in the cytoplasm. It carries out the reaction sn-glycerol 3-phosphate + NAD(+) = dihydroxyacetone phosphate + NADH + H(+). The enzyme catalyses sn-glycerol 3-phosphate + NADP(+) = dihydroxyacetone phosphate + NADPH + H(+). It participates in membrane lipid metabolism; glycerophospholipid metabolism. In terms of biological role, catalyzes the reduction of the glycolytic intermediate dihydroxyacetone phosphate (DHAP) to sn-glycerol 3-phosphate (G3P), the key precursor for phospholipid synthesis. The polypeptide is Glycerol-3-phosphate dehydrogenase [NAD(P)+] (Geobacter metallireducens (strain ATCC 53774 / DSM 7210 / GS-15)).